We begin with the raw amino-acid sequence, 153 residues long: Protein DpnD (153 aa).

This Streptococcus pneumoniae serotype 4 (strain ATCC BAA-334 / TIGR4) protein is Protein DpnD.